A 500-amino-acid polypeptide reads, in one-letter code: E3 ubiquitin-protein ligase TRIM69 (500 aa).

The necessary for nuclear localization stretch occupies residues 1–152; the sequence is MEVSTNPSSN…SVGQSKEFLQ (152 aa). The RING-type zinc-finger motif lies at 41–82; the sequence is CPLCNDWFRDPLMLSCGHNFCEACIQDFWRLQAKETFCPECK. Residues 161–255 are a coiled coil; it reads TEELAIQQGQ…QCLLAKDMLV (95 aa). Positions 305 to 500 constitute a B30.2/SPRY domain; that stretch reads PIQYMVWREM…KEPLHILHPQ (196 aa). At S341 the chain carries Phosphoserine.

This sequence belongs to the TRIM/RBCC family. Homo-multimer; required for antiviral activity. Interacts with PML. Post-translationally, phosphorylated. Phosphorylation is necessary for nuclear localization.

Its subcellular location is the cytoplasm. The protein localises to the nucleus. The protein resides in the nucleus speckle. It is found in the cytoskeleton. It localises to the microtubule organizing center. Its subcellular location is the centrosome. It carries out the reaction S-ubiquitinyl-[E2 ubiquitin-conjugating enzyme]-L-cysteine + [acceptor protein]-L-lysine = [E2 ubiquitin-conjugating enzyme]-L-cysteine + N(6)-ubiquitinyl-[acceptor protein]-L-lysine.. Its pathway is protein modification; protein ubiquitination. Functionally, E3 ubiquitin ligase that plays an important role in antiviral immunity by restricting different viral infections including dengue virus or vesicular stomatitis indiana virus. Ubiquitinates viral proteins such as dengue virus NS3 thereby limiting infection. In addition, acts as a key mediator of type I interferon induced microtubule stabilization by directly associating to microtubules independently of its E3 ligase activity. Also plays a role in cataract formation together with TP53. Mechanistically, inhibits UVB-induced cell apoptosis and reactive oxygen species (ROS) production by inducing TP53 ubiquitination. Regulates centrosome dynamics and mitotic progression by ubiquitinating STK3/MST2; leading to its redistribution to the perinuclear cytoskeleton and subsequent phosphorylation by PLK1. The chain is E3 ubiquitin-protein ligase TRIM69 (TRIM69) from Homo sapiens (Human).